The following is a 246-amino-acid chain: UDP-N-acetyl-D-mannosaminuronic acid transferase (246 aa).

This sequence belongs to the glycosyltransferase 26 family.

The catalysed reaction is UDP-N-acetyl-alpha-D-mannosaminouronate + N-acetyl-alpha-D-glucosaminyl-di-trans,octa-cis-undecaprenyl diphosphate = beta-D-ManNAcA-(1-&gt;4)-alpha-D-GlcNAc-di-trans,octa-cis-undecaprenyl diphosphate + UDP + H(+). It functions in the pathway bacterial outer membrane biogenesis; enterobacterial common antigen biosynthesis. Its function is as follows. Catalyzes the synthesis of Und-PP-GlcNAc-ManNAcA (Lipid II), the second lipid-linked intermediate involved in enterobacterial common antigen (ECA) synthesis. This is UDP-N-acetyl-D-mannosaminuronic acid transferase from Escherichia coli O1:K1 / APEC.